The chain runs to 563 residues: Cystathionine gamma-synthase 1, chloroplastic (563 aa).

The N-terminal 68 residues, 1–68 (MAVSSFQCPT…SRILRFPPNF (68 aa)), are a transit peptide targeting the chloroplast. Positions 226, 228, 256, 257, 281, 376, and 378 each coordinate pyridoxal 5'-phosphate. Lysine 379 carries the N6-(pyridoxal phosphate)lysine modification.

The protein belongs to the trans-sulfuration enzymes family. The cofactor is pyridoxal 5'-phosphate.

It is found in the plastid. The protein resides in the chloroplast. It carries out the reaction O-phospho-L-homoserine + L-cysteine = L,L-cystathionine + phosphate. The enzyme catalyses O-succinyl-L-homoserine + L-cysteine = L,L-cystathionine + succinate + H(+). It functions in the pathway amino-acid biosynthesis; L-methionine biosynthesis via de novo pathway; L-cystathionine from O-succinyl-L-homoserine: step 1/1. Inhibited by propargylglycine. Functionally, catalyzes the first committed step of methionine (Met) biosynthesis. Catalyzes the formation of L-cystathionine from homoserine esters and L-cysteine, via a gamma-replacement reaction. Substrate preference for cystathionine synthesis is O-phospho-L-homoserine (OPH) &gt; O(4)-succinyl-L-homoserine (OSH) &gt;&gt; O-acetyl-L-homoserine (OAH). Is able, at extremely low rate, to catalyze a gamma-elimination of OPH in the absence of cysteine to produce inorganic phosphate (Pi), 2-oxobutanoate and ammonia. This Arabidopsis thaliana (Mouse-ear cress) protein is Cystathionine gamma-synthase 1, chloroplastic.